A 469-amino-acid chain; its full sequence is DNA polymerase delta subunit 2 (469 aa).

Methionine 1 is subject to N-acetylmethionine. A Phosphoserine modification is found at serine 257.

This sequence belongs to the DNA polymerase delta/II small subunit family. In terms of assembly, component of both the DNA polymerase delta and DNA polymerase zeta complexes. Component of the tetrameric DNA polymerase delta complex (Pol-delta4), which consists of POLD1/p125, POLD2/p50, POLD3/p66/p68 and POLD4/p12, with POLD1 bearing DNA polymerase and 3' to 5' proofreading exonuclease activities. Within Pol-delta4, directly interacts with POLD1, POLD3 and POLD4. Following stress caused by DNA damaging agents or by replication stress, POLD4 is degraded and Pol-delta4 is converted into a trimeric form of the complex (Pol-delta3), which consists of POLD1, POLD2 and POLD3. Pol-delta3 is the major form occurring at S phase replication sites, as well as DNA damage sites. Also observed as a dimeric complex with POLD2 (Pol-delta2 complex). Pol-delta2 is relatively insensitive to the PCNA stimulation (2-5-fold) compared to Pol-delta4 that is stimulated by over 50-fold. Contrary to the other components of Pol-delta4, does not directly interact with PCNA. As POLD1 and POLD4, directly interacts with WRNIP1; this interaction stimulates DNA polymerase delta-mediated DNA synthesis, independently of the presence of PCNA. This stimulation may be due predominantly to an increase of initiation frequency and also to increased processivity. Directly interacts with POLDIP2 and POLDIP3. Directly interacts with KCTD13/PDIP1; in the presence of PCNA, this interaction may stimulate DNA polymerase activity. Component of the tetrameric Pol-zeta complex (Pol-zeta4), which consists of REV3L, MAD2L2, POLD2 and POLD3, with REV3L bearing DNA polymerase catalytic activity. Interacts with KCTD10.

The protein resides in the nucleus. Accessory component of both the DNA polymerase delta complex and the DNA polymerase zeta complex. As a component of the trimeric and tetrameric DNA polymerase delta complexes (Pol-delta3 and Pol-delta4, respectively), plays a role in high fidelity genome replication, including in lagging strand synthesis, and repair. Pol-delta3 and Pol-delta4 are characterized by the absence or the presence of POLD4. They exhibit differences in catalytic activity. Most notably, Pol-delta3 shows higher proofreading activity than Pol-delta4. Although both Pol-delta3 and Pol-delta4 process Okazaki fragments in vitro, Pol-delta3 may also be better suited to fulfill this task, exhibiting near-absence of strand displacement activity compared to Pol-delta4 and stalling on encounter with the 5'-blocking oligonucleotides. Pol-delta3 idling process may avoid the formation of a gap, while maintaining a nick that can be readily ligated. Along with DNA polymerase kappa, DNA polymerase delta carries out approximately half of nucleotide excision repair (NER) synthesis following UV irradiation. Under conditions of DNA replication stress, required for the repair of broken replication forks through break-induced replication (BIR). Involved in the translesion synthesis (TLS) of templates carrying O6-methylguanine or abasic sites performed by Pol-delta4, independently of DNA polymerase zeta (REV3L) or eta (POLH). Facilitates abasic site bypass by DNA polymerase delta by promoting extension from the nucleotide inserted opposite the lesion. Also involved in TLS as a component of the DNA polymerase zeta complex. Along with POLD3, dramatically increases the efficiency and processivity of DNA synthesis of the DNA polymerase zeta complex compared to the minimal zeta complex, consisting of only REV3L and REV7. This Mus musculus (Mouse) protein is DNA polymerase delta subunit 2 (Pold2).